A 593-amino-acid chain; its full sequence is NADH-quinone oxidoreductase subunit C/D (593 aa).

Residues 1-184 (MTADNALYIP…DPYSLTLAKQ (184 aa)) form an NADH dehydrogenase I subunit C region. The NADH dehydrogenase I subunit D stretch occupies residues 208 to 593 (DYMFLNLGPN…IDFVMADVDR (386 aa)).

It in the N-terminal section; belongs to the complex I 30 kDa subunit family. This sequence in the C-terminal section; belongs to the complex I 49 kDa subunit family. As to quaternary structure, NDH-1 is composed of 13 different subunits. Subunits NuoB, CD, E, F, and G constitute the peripheral sector of the complex.

The protein localises to the cell inner membrane. The catalysed reaction is a quinone + NADH + 5 H(+)(in) = a quinol + NAD(+) + 4 H(+)(out). NDH-1 shuttles electrons from NADH, via FMN and iron-sulfur (Fe-S) centers, to quinones in the respiratory chain. The immediate electron acceptor for the enzyme in this species is believed to be ubiquinone. Couples the redox reaction to proton translocation (for every two electrons transferred, four hydrogen ions are translocated across the cytoplasmic membrane), and thus conserves the redox energy in a proton gradient. The polypeptide is NADH-quinone oxidoreductase subunit C/D (Pseudomonas syringae pv. tomato (strain ATCC BAA-871 / DC3000)).